The chain runs to 302 residues: Sulfate adenylyltransferase subunit 2 (302 aa).

The segment at 279–302 (ERQGRAIDHDQSGSMELKKRQGYF) is disordered. The span at 280 to 302 (RQGRAIDHDQSGSMELKKRQGYF) shows a compositional bias: basic and acidic residues.

The protein belongs to the PAPS reductase family. CysD subfamily. In terms of assembly, heterodimer composed of CysD, the smaller subunit, and CysN.

The catalysed reaction is sulfate + ATP + H(+) = adenosine 5'-phosphosulfate + diphosphate. The protein operates within sulfur metabolism; hydrogen sulfide biosynthesis; sulfite from sulfate: step 1/3. Functionally, with CysN forms the ATP sulfurylase (ATPS) that catalyzes the adenylation of sulfate producing adenosine 5'-phosphosulfate (APS) and diphosphate, the first enzymatic step in sulfur assimilation pathway. APS synthesis involves the formation of a high-energy phosphoric-sulfuric acid anhydride bond driven by GTP hydrolysis by CysN coupled to ATP hydrolysis by CysD. This chain is Sulfate adenylyltransferase subunit 2, found in Photobacterium profundum (strain SS9).